Consider the following 343-residue polypeptide: Probable dual-specificity RNA methyltransferase RlmN (343 aa).

Glutamate 91 acts as the Proton acceptor in catalysis. The region spanning 97–326 (HPGRITACIS…AEIRQEKGSD (230 aa)) is the Radical SAM core domain. Cysteines 104 and 331 form a disulfide. [4Fe-4S] cluster-binding residues include cysteine 111, cysteine 115, and cysteine 118. Residues 158–159 (GE), serine 190, 213–215 (SLH), and asparagine 289 each bind S-adenosyl-L-methionine. Cysteine 331 acts as the S-methylcysteine intermediate in catalysis.

Belongs to the radical SAM superfamily. RlmN family. It depends on [4Fe-4S] cluster as a cofactor.

The protein localises to the cytoplasm. The enzyme catalyses adenosine(2503) in 23S rRNA + 2 reduced [2Fe-2S]-[ferredoxin] + 2 S-adenosyl-L-methionine = 2-methyladenosine(2503) in 23S rRNA + 5'-deoxyadenosine + L-methionine + 2 oxidized [2Fe-2S]-[ferredoxin] + S-adenosyl-L-homocysteine. The catalysed reaction is adenosine(37) in tRNA + 2 reduced [2Fe-2S]-[ferredoxin] + 2 S-adenosyl-L-methionine = 2-methyladenosine(37) in tRNA + 5'-deoxyadenosine + L-methionine + 2 oxidized [2Fe-2S]-[ferredoxin] + S-adenosyl-L-homocysteine. Specifically methylates position 2 of adenine 2503 in 23S rRNA and position 2 of adenine 37 in tRNAs. The chain is Probable dual-specificity RNA methyltransferase RlmN from Thermotoga neapolitana (strain ATCC 49049 / DSM 4359 / NBRC 107923 / NS-E).